A 101-amino-acid chain; its full sequence is Putative monooxygenase Rv0793 (101 aa).

The ABM domain occupies 5 to 93 (VAVIARFMPR…LTRPVAVTVL (89 aa)).

As to quaternary structure, homodimer.

Functionally, putative monooygenase that might be involved in antibiotic biosynthesis, or may act as reactive oxygen species scavenger that could help in evading host defenses. This is Putative monooxygenase Rv0793 from Mycobacterium tuberculosis (strain ATCC 25618 / H37Rv).